We begin with the raw amino-acid sequence, 101 residues long: Small ribosomal subunit protein uS14 (101 aa).

It belongs to the universal ribosomal protein uS14 family. Part of the 30S ribosomal subunit. Contacts proteins S3 and S10.

In terms of biological role, binds 16S rRNA, required for the assembly of 30S particles and may also be responsible for determining the conformation of the 16S rRNA at the A site. The sequence is that of Small ribosomal subunit protein uS14 from Francisella tularensis subsp. novicida (strain U112).